A 157-amino-acid chain; its full sequence is Prefoldin subunit alpha (157 aa).

This sequence belongs to the prefoldin subunit alpha family. As to quaternary structure, heterohexamer of two alpha and four beta subunits.

Its subcellular location is the cytoplasm. Functionally, molecular chaperone capable of stabilizing a range of proteins. Seems to fulfill an ATP-independent, HSP70-like function in archaeal de novo protein folding. The sequence is that of Prefoldin subunit alpha from Methanopyrus kandleri (strain AV19 / DSM 6324 / JCM 9639 / NBRC 100938).